Here is an 82-residue protein sequence, read N- to C-terminus: Putative antitoxin Saci_0468 (82 aa).

Belongs to the UPF0330 family.

In terms of biological role, possibly the antitoxin component of a type II toxin-antitoxin (TA) system. In Sulfolobus acidocaldarius (strain ATCC 33909 / DSM 639 / JCM 8929 / NBRC 15157 / NCIMB 11770), this protein is Putative antitoxin Saci_0468.